The primary structure comprises 117 residues: Large ribosomal subunit protein bL20 (117 aa).

This sequence belongs to the bacterial ribosomal protein bL20 family.

Its function is as follows. Binds directly to 23S ribosomal RNA and is necessary for the in vitro assembly process of the 50S ribosomal subunit. It is not involved in the protein synthesizing functions of that subunit. In Aliivibrio fischeri (strain ATCC 700601 / ES114) (Vibrio fischeri), this protein is Large ribosomal subunit protein bL20.